The sequence spans 165 residues: Regulator of ribonuclease activity A (165 aa).

This sequence belongs to the RraA family. In terms of assembly, homotrimer. Binds to both RNA-binding sites in the C-terminal region of Rne and to RhlB.

The protein localises to the cytoplasm. Its function is as follows. Globally modulates RNA abundance by binding to RNase E (Rne) and regulating its endonucleolytic activity. Can modulate Rne action in a substrate-dependent manner by altering the composition of the degradosome. Modulates RNA-binding and helicase activities of the degradosome. The polypeptide is Regulator of ribonuclease activity A (Actinobacillus pleuropneumoniae serotype 7 (strain AP76)).